A 156-amino-acid polypeptide reads, in one-letter code: Small ribosomal subunit protein uS7 (156 aa).

Belongs to the universal ribosomal protein uS7 family. In terms of assembly, part of the 30S ribosomal subunit. Contacts proteins S9 and S11.

One of the primary rRNA binding proteins, it binds directly to 16S rRNA where it nucleates assembly of the head domain of the 30S subunit. Is located at the subunit interface close to the decoding center, probably blocks exit of the E-site tRNA. In Clavibacter michiganensis subsp. michiganensis (strain NCPPB 382), this protein is Small ribosomal subunit protein uS7.